The chain runs to 1163 residues: Hamartin (1163 aa).

Lysine 30 is covalently cross-linked (Glycyl lysine isopeptide (Lys-Gly) (interchain with G-Cter in ubiquitin)). Residues 295 to 316 (SSYVDTQNSYGGATSTPSSTSR) are compositionally biased toward polar residues. Disordered regions lie at residues 295-337 (SSYV…STRP) and 353-594 (CGMT…QRGV). The segment covering 321 to 337 (STPGQLPQSLSSLSTRP) has biased composition (low complexity). Pro residues predominate over residues 393 to 402 (TSPPPAPPCP). The mediates interaction with WDR45B stretch occupies residues 403 to 787 (QDDCAHGPAS…QIRQLQHDRE (385 aa)). Over residues 474 to 487 (EKDKEEAAISKELS) the composition is skewed to basic and acidic residues. 6 positions are modified to phosphoserine: serine 487, serine 505, serine 511, serine 521, serine 595, and serine 598. Residues 512-530 (LSGSQRKTHSAASGTQGFS) are compositionally biased toward polar residues. Coiled-coil stretches lie at residues 721-919 (RKVI…LAKK) and 970-994 (EKDG…ERLD). Positions 1008–1020 (NEEAAGHNGETRT) are enriched in basic and acidic residues. The interval 1008–1163 (NEEAAGHNGE…DYNETHHEHS (156 aa)) is disordered. Positions 1029-1046 (SCGGRVTGGSSSSSSELS) are enriched in low complexity. Over residues 1066 to 1083 (EPSSSIPTTVGSLPSSKS) the composition is skewed to polar residues. The span at 1088–1099 (KTRELFRNKSES) shows a compositional bias: basic and acidic residues. Serine 1097 carries the post-translational modification Phosphoserine. Residues 1131–1146 (PPSLDAPHPSSPSSDS) are compositionally biased toward low complexity. Positions 1154–1163 (DYNETHHEHS) are enriched in basic and acidic residues.

In terms of assembly, component of the TSC-TBC complex (also named Rhebulator complex), composed of 2 molecules of TSC1, 2 molecules of TSC2 and 1 molecule of TBC1D7. Probably forms a complex composed of chaperones HSP90 and HSP70, co-chaperones STIP1/HOP, CDC37, PPP5C, PTGES3/p23, TSC1 and client protein TSC2. Forms a complex composed of chaperones HSP90 and HSP70, co-chaperones CDC37, PPP5C, TSC1 and client protein TSC2, CDK4, AKT, RAF1 and NR3C1; this complex does not contain co-chaperones STIP1/HOP and PTGES3/p23. Forms a complex containing HSP90AA1, TSC1 and TSC2; TSC1 is required to recruit TCS2 to the complex. Interacts (via C-terminus) with the closed form of HSP90AA1 (via the middle domain and TPR repeat-binding motif). Interacts with DOCK7. Interacts with FBXW5. Interacts with WDR45B. Interacts with RPAP3 and URI1. Phosphorylation at Ser-505 does not affect interaction with TSC2. Post-translationally, 'Lys-63'-linked ubiquitinated at Lys-30 by PELI1; the ubiquitination promotes TSC1/TSC2 complex stability. Highly expressed in brain, spleen and kidney, followed by liver and heart.

It localises to the lysosome membrane. It is found in the cytoplasm. The protein localises to the cytosol. Non-catalytic component of the TSC-TBC complex, a multiprotein complex that acts as a negative regulator of the canonical mTORC1 complex, an evolutionarily conserved central nutrient sensor that stimulates anabolic reactions and macromolecule biosynthesis to promote cellular biomass generation and growth. The TSC-TBC complex acts as a GTPase-activating protein (GAP) for the small GTPase RHEB, a direct activator of the protein kinase activity of mTORC1. In absence of nutrients, the TSC-TBC complex inhibits mTORC1, thereby preventing phosphorylation of ribosomal protein S6 kinase (RPS6KB1 and RPS6KB2) and EIF4EBP1 (4E-BP1) by the mTORC1 signaling. The TSC-TBC complex is inactivated in response to nutrients, relieving inhibition of mTORC1. Within the TSC-TBC complex, TSC1 stabilizes TSC2 and prevents TSC2 self-aggregation. Involved in microtubule-mediated protein transport via its ability to regulate mTORC1 signaling. Also acts as a co-chaperone for HSP90AA1 facilitating HSP90AA1 chaperoning of protein clients such as kinases, TSC2 and glucocorticoid receptor NR3C1. Increases ATP binding to HSP90AA1 and inhibits HSP90AA1 ATPase activity. Competes with the activating co-chaperone AHSA1 for binding to HSP90AA1, thereby providing a reciprocal regulatory mechanism for chaperoning of client proteins. Recruits TSC2 to HSP90AA1 and stabilizes TSC2 by preventing the interaction between TSC2 and ubiquitin ligase HERC1. The protein is Hamartin of Rattus norvegicus (Rat).